The chain runs to 397 residues: ATP-dependent RNA helicase RhlB (397 aa).

Residues 9–37 (TRFHDFNLAPSLMHAIHDLGFPYCTPIQA) carry the Q motif motif. One can recognise a Helicase ATP-binding domain in the interval 40–220 (LGFTLRGQDA…KQWTVDPAIV (181 aa)). An ATP-binding site is contributed by 53-60 (AQTGTGKT). Positions 166-169 (DEAD) match the DEAD box motif. One can recognise a Helicase C-terminal domain in the interval 243-393 (DKYKLLYNLV…MPPAELLKPV (151 aa)).

This sequence belongs to the DEAD box helicase family. RhlB subfamily. As to quaternary structure, component of the RNA degradosome, which is a multiprotein complex involved in RNA processing and mRNA degradation.

Its subcellular location is the cytoplasm. The enzyme catalyses ATP + H2O = ADP + phosphate + H(+). DEAD-box RNA helicase involved in RNA degradation. Has RNA-dependent ATPase activity and unwinds double-stranded RNA. This Pseudomonas aeruginosa (strain UCBPP-PA14) protein is ATP-dependent RNA helicase RhlB.